We begin with the raw amino-acid sequence, 270 residues long: NAD kinase (270 aa).

Asp-49 functions as the Proton acceptor in the catalytic mechanism. Residues 49–50, Arg-54, 126–127, Arg-152, Asp-154, 165–170, Ala-189, and Gln-227 contribute to the NAD(+) site; these read DG, NE, and TAYNKS.

Belongs to the NAD kinase family. A divalent metal cation serves as cofactor.

The protein localises to the cytoplasm. It catalyses the reaction NAD(+) + ATP = ADP + NADP(+) + H(+). In terms of biological role, involved in the regulation of the intracellular balance of NAD and NADP, and is a key enzyme in the biosynthesis of NADP. Catalyzes specifically the phosphorylation on 2'-hydroxyl of the adenosine moiety of NAD to yield NADP. This Lactococcus lactis subsp. cremoris (strain SK11) protein is NAD kinase.